The sequence spans 191 residues: Guanylate kinase (191 aa).

Positions 8-188 (GRLVVLAGPS…AVSDIKEILV (181 aa)) constitute a Guanylate kinase-like domain. 15-22 (GPSAVGKS) is a binding site for ATP.

It belongs to the guanylate kinase family.

It is found in the cytoplasm. It carries out the reaction GMP + ATP = GDP + ADP. In terms of biological role, essential for recycling GMP and indirectly, cGMP. This chain is Guanylate kinase, found in Corynebacterium diphtheriae (strain ATCC 700971 / NCTC 13129 / Biotype gravis).